We begin with the raw amino-acid sequence, 425 residues long: G protein-activated inward rectifier potassium channel 2 (425 aa).

The Cytoplasmic segment spans residues 1 to 91 (MTMAKLTESM…ILTTLVDLKW (91 aa)). A phosphoserine mark is found at serine 18 and serine 25. The helical transmembrane segment at 92-116 (RFNLLIFVMVYTVTWLFFGMIWWLI) threads the bilayer. Topologically, residues 117 to 140 (AYIRGDMDHVEDPSWTPCVTNLNG) are extracellular. An intramembrane region (helical; Pore-forming) is located at residues 141 to 152 (FVSAFLFSIETE). An intramembrane region (pore-forming) is located at residues 153-159 (TTIGYGY). The Selectivity filter motif lies at 154-159 (TIGYGY). Residues 160 to 168 (RVITDKCPE) lie on the Extracellular side of the membrane. The helical transmembrane segment at 169 to 190 (GIILLLIQSVLGSIVNAFMVGC) threads the bilayer. Residues 191 to 425 (MFVKISQPKK…VANLENESKV (235 aa)) are Cytoplasmic-facing. The tract at residues 392–425 (NQHAELETEEEEKNPEEQTERNGDVANLENESKV) is disordered. Residues 422 to 425 (ESKV) carry the PDZ-binding motif.

The protein belongs to the inward rectifier-type potassium channel (TC 1.A.2.1) family. KCNJ6 subfamily. Associates with KCNJ3/GIRK1 or KCNJ5/GRIK4 to form a G-protein-activated heteromultimer pore-forming unit. The resulting inward current is much larger. Interacts (via PDZ-binding motif) with SNX27 (via PDZ domain); the interaction is required when endocytosed to prevent degradation in lysosomes and promote recycling to the plasma membrane. In terms of tissue distribution, expressed in insulin-secreting cells and brain.

It is found in the membrane. It catalyses the reaction K(+)(in) = K(+)(out). Activated by phosphatidylinositol 4,5 biphosphate (PtdIns(4,5)P2). In terms of biological role, inward rectifier potassium channels are characterized by a greater tendency to allow potassium to flow into the cell rather than out of it. Their voltage dependence is regulated by the concentration of extracellular potassium; as external potassium is raised, the voltage range of the channel opening shifts to more positive voltages. The inward rectification is mainly due to the blockage of outward current by internal magnesium. This potassium channel may be involved in the regulation of insulin secretion by glucose and/or neurotransmitters acting through G-protein-coupled receptors. The protein is G protein-activated inward rectifier potassium channel 2 (KCNJ6) of Mesocricetus auratus (Golden hamster).